The chain runs to 402 residues: Beta-1,4-galactosyltransferase 1 (402 aa).

The Cytoplasmic segment spans residues 1 to 24; it reads MKFREPLLGGSAAMPGASLQRACR. A helical; Signal-anchor for type II membrane protein membrane pass occupies residues 25–44; that stretch reads LLVAVCALHLGVTLVYYLAG. Over 45–402 the chain is Lumenal; sequence RDLRRLPQLV…KITVDIGTPS (358 aa). Residues 77–130 form a disordered region; that stretch reads LRLRGVAPPPPLQNSSKPRSRAPSNLDAYSHPGPGPGPGSNLTSAPVPSTTTRS. 2 N-linked (GlcNAc...) asparagine glycosylation sites follow: Asn-90 and Asn-117. The span at 116–130 shows a compositional bias: polar residues; it reads SNLTSAPVPSTTTRS. A disulfide bridge links Cys-134 with Cys-176. UDP-alpha-D-galactose-binding positions include 187 to 191, 226 to 228, 253 to 254, and Trp-314; these read PFRNR, FNR, and VD. Cys-247 and Cys-266 are disulfide-bonded. Residue Asp-254 coordinates Mn(2+). 316–319 provides a ligand contact to N-acetyl-D-glucosamine; that stretch reads GEDD. His-347 contributes to the Mn(2+) binding site. Position 347 to 349 (347 to 349) interacts with UDP-alpha-D-galactose; the sequence is HSR. An N-acetyl-D-glucosamine-binding site is contributed by Arg-359.

The protein belongs to the glycosyltransferase 7 family. As to quaternary structure, homodimer; and heterodimer with alpha-lactalbumin to form lactose synthase. Interacts (via N-terminal cytoplasmic domain) with UBE2Q1 (via N-terminus); the interaction is direct. Mn(2+) serves as cofactor. In terms of processing, the soluble form derives from the membrane forms by proteolytic processing. In terms of tissue distribution, detected in milk (at protein level).

It localises to the golgi apparatus. The protein resides in the golgi stack membrane. Its subcellular location is the cell membrane. It is found in the cell surface. The protein localises to the cell projection. It localises to the filopodium. The protein resides in the secreted. The enzyme catalyses D-glucose + UDP-alpha-D-galactose = lactose + UDP + H(+). It carries out the reaction an N-acetyl-beta-D-glucosaminyl derivative + UDP-alpha-D-galactose = a beta-D-galactosyl-(1-&gt;4)-N-acetyl-beta-D-glucosaminyl derivative + UDP + H(+). The catalysed reaction is N-acetyl-D-glucosamine + UDP-alpha-D-galactose = beta-D-galactosyl-(1-&gt;4)-N-acetyl-D-glucosamine + UDP + H(+). It catalyses the reaction a beta-D-GlcNAc-(1-&gt;3)-beta-D-Gal-(1-&gt;4)-beta-D-Glc-(1&lt;-&gt;1)-Cer(d18:1(4E)) + UDP-alpha-D-galactose = a neolactoside nLc4Cer(d18:1(4E)) + UDP + H(+). The enzyme catalyses a beta-D-glucosylceramide + UDP-alpha-D-galactose = a beta-D-galactosyl-(1-&gt;4)-beta-D-glucosyl-(1&lt;-&gt;1)-ceramide + UDP + H(+). It carries out the reaction a neolactoside IV(3)-beta-GlcNAc-nLc4Cer + UDP-alpha-D-galactose = a neolactoside nLc6Cer + UDP + H(+). It functions in the pathway protein modification; protein glycosylation. Its function is as follows. The Golgi complex form catalyzes the production of lactose in the lactating mammary gland and could also be responsible for the synthesis of complex-type N-linked oligosaccharides in many glycoproteins as well as the carbohydrate moieties of glycolipids. In terms of biological role, the cell surface form functions as a recognition molecule during a variety of cell to cell and cell to matrix interactions, as those occurring during development and egg fertilization, by binding to specific oligosaccharide ligands on opposing cells or in the extracellular matrix. The secreted form is responsible for the synthesis of complex-type to N-linked oligosaccharides in many glycoproteins as well as the carbohydrate moieties of glycolipids. This is Beta-1,4-galactosyltransferase 1 (B4GALT1) from Bos taurus (Bovine).